A 274-amino-acid polypeptide reads, in one-letter code: MKNTVIALLALLASAGSLAATPWQKISQPIGGSAQSIGAFSNGCIVGAEALPLSATGYQVMRTDQRRYFGHPDLVQFIQRLSNQVHNKGMGTVLIGDMGMPAGGRFNGGHASHQTGLDVDIFLQLPQTRWTSSQLLKPQALDLVASDGKHVVPSLWSPQISQLIKLAAEDSEVTRIFVNPAIKQQLCLDAGSDRQWLRKVRPWFQHRAHMHVRLRCPAGSLECEDQAPPPPGDGCGAELQSWFEPPKPGSTPPVKKTPPPLPPSCQALLDEHVL.

A signal peptide spans 1-19 (MKNTVIALLALLASAGSLA). 3 disulfide bridges follow: C44–C265, C187–C235, and C216–C223. H110, H113, D120, D147, H150, and H211 together coordinate Zn(2+). A disordered region spans residues 224 to 263 (EDQAPPPPGDGCGAELQSWFEPPKPGSTPPVKKTPPPLPP). The span at 245-263 (PPKPGSTPPVKKTPPPLPP) shows a compositional bias: pro residues.

This sequence belongs to the peptidase M74 family. Dimer. Requires Zn(2+) as cofactor.

The protein resides in the periplasm. Its function is as follows. Murein endopeptidase that cleaves the D-alanyl-meso-2,6-diamino-pimelyl amide bond that connects peptidoglycan strands. Likely plays a role in the removal of murein from the sacculus. In Klebsiella pneumoniae (strain 342), this protein is Penicillin-insensitive murein endopeptidase.